Consider the following 463-residue polypeptide: Glucagon-like peptide 1 receptor (463 aa).

Residues methionine 1–alanine 21 form the signal peptide. Over glycine 22–glutamate 139 the chain is Extracellular. 3 cysteine pairs are disulfide-bonded: cysteine 46–cysteine 71, cysteine 62–cysteine 104, and cysteine 85–cysteine 126. Asparagine 63, asparagine 82, and asparagine 115 each carry an N-linked (GlcNAc...) asparagine glycan. A helical transmembrane segment spans residues glutamine 140–alanine 164. The Cytoplasmic portion of the chain corresponds to isoleucine 165–threonine 175. The chain crosses the membrane as a helical span at residues arginine 176 to leucine 201. The Extracellular segment spans residues lysine 202–arginine 227. Cysteine 226 and cysteine 296 are joined by a disulfide. Residues leucine 228–leucine 251 traverse the membrane as a helical segment. At tyrosine 252 to isoleucine 265 the chain is on the cytoplasmic side. The chain crosses the membrane as a helical span at residues phenylalanine 266–leucine 290. Residues tyrosine 291–tyrosine 305 lie on the Extracellular side of the membrane. A helical membrane pass occupies residues tryptophan 306–isoleucine 328. The Cytoplasmic segment spans residues cysteine 329–arginine 348. Cysteine 341 is subject to ADP-ribosylcysteine. Position 348 is an ADP-ribosylarginine (arginine 348). The helical transmembrane segment at leucine 349–valine 370 threads the bilayer. An important for allosteric inhibitor binding region spans residues serine 352–threonine 355. The Extracellular segment spans residues methionine 371–lysine 383. The chain crosses the membrane as a helical span at residues leucine 384–phenylalanine 404. The Cytoplasmic portion of the chain corresponds to valine 405–serine 463.

It belongs to the G-protein coupled receptor 2 family. As to quaternary structure, may form homodimers and heterodimers with GIPR. N-glycosylation enhances cell surface expression and lengthens receptor half-life by preventing degradation in the ER. As to expression, pancreatic islets, stomach, lung, rat insulinoma cell line.

The protein localises to the cell membrane. Functionally, G-protein coupled receptor for glucagon-like peptide 1 (GLP-1). Ligand binding triggers activation of a signaling cascade that leads to the activation of adenylyl cyclase and increased intracellular cAMP levels. Plays a role in regulating insulin secretion in response to GLP-1. The polypeptide is Glucagon-like peptide 1 receptor (Glp1r) (Rattus norvegicus (Rat)).